We begin with the raw amino-acid sequence, 641 residues long: MLSGIEAAAGEYEDSELRCRVAVEELSPGGQPRRRQALRTAELSLGRNERRELMLRLQAPGPAGRPRCFPLRAARLFTRFAEAGRSTLRLPAHDTPGAGAVQLLLSDCPPDRLRRFLRTLRLKLAAAPGPGPASARAQLLGPRPRDFVTISPVQPEERRLRAATRVPDTTLVKRPVEPQAGAEPSTEAPRWPLPVKRLSLPSTKPQLSEEQAAVLRAVLKGQSIFFTGSAGTGKSYLLKRILGSLPPTGTVATASTGVAACHIGGTTLHAFAGIGSGQAPLAQCVALAQRPGVRQGWLNCQRLVIDEISMVEADLFDKLEAVARAVRQQNKPFGGIQLIICGDFLQLPPVTKGSQPPRFCFQSKSWKRCVPVTLELTKVWRQADQTFISLLQAVRLGRCSDEVTRQLQATASHKVGRDGIVATRLCTHQDDVALTNERRLQELPGKVHRFEAMDSNPELASTLDAQCPVSQLLQLKLGAQVMLVKNLSVSRGLVNGARGVVVGFEAEGRGLPQVRFLCGVTEVIHADRWTVQATGGQLLSRQQLPLQLAWAMSIHKSQGMTLDCVEISLGRVFASGQAYVALSRARSLQGLRVLDFDPMAVRCDPRVLHFYATLRRGRSLSLESPDDDEAASDQENMDPIL.

Residues 1–180 are PINT; it reads MLSGIEAAAG…LVKRPVEPQA (180 aa). S27 and S151 each carry phosphoserine. The interval 167 to 641 is hydrolyzes ATP in the presence of both magnesium and single-stranded DNA; weak activity in the presence of RNA or double-stranded DNA; No unwinding activity; the sequence is PDTTLVKRPV…SDQENMDPIL (475 aa). The disordered stretch occupies residues 173–192; it reads KRPVEPQAGAEPSTEAPRWP. 228–235 contributes to the ATP binding site; it reads GSAGTGKS. The DNA-binding element occupies 577–596; sequence QAYVALSRARSLQGLRVLDF. Residues 622 to 641 form a disordered region; it reads LESPDDDEAASDQENMDPIL. The segment covering 624-641 has biased composition (acidic residues); that stretch reads SPDDDEAASDQENMDPIL.

This sequence belongs to the helicase family. PIF1 subfamily. As to quaternary structure, monomer. Interacts with telomerase. The cofactor is Mg(2+). Weak ubiquitous expression.

It is found in the nucleus. The protein resides in the mitochondrion. It carries out the reaction Couples ATP hydrolysis with the unwinding of duplex DNA at the replication fork by translocating in the 5'-3' direction. This creates two antiparallel DNA single strands (ssDNA). The leading ssDNA polymer is the template for DNA polymerase III holoenzyme which synthesizes a continuous strand.. It catalyses the reaction ATP + H2O = ADP + phosphate + H(+). DNA-dependent ATPase and 5'-3' DNA helicase required for the maintenance of both mitochondrial and nuclear genome stability. Efficiently unwinds G-quadruplex (G4) DNA structures and forked RNA-DNA hybrids. Resolves G4 structures, preventing replication pausing and double-strand breaks (DSBs) at G4 motifs. Involved in the maintenance of telomeric DNA. Inhibits telomere elongation, de novo telomere formation and telomere addition to DSBs via catalytic inhibition of telomerase. Reduces the processivity of telomerase by displacing active telomerase from DNA ends. Releases telomerase by unwinding the short telomerase RNA/telomeric DNA hybrid that is the intermediate in the telomerase reaction. Possesses an intrinsic strand annealing activity. In Homo sapiens (Human), this protein is ATP-dependent DNA helicase PIF1.